The sequence spans 331 residues: Biotin synthase (331 aa).

The 230-residue stretch at 46–275 (YYGKKVKLNM…TKEIRISGGR (230 aa)) folds into the Radical SAM core domain. Residues C64, C68, and C71 each contribute to the [4Fe-4S] cluster site. C108, C140, C200, and R270 together coordinate [2Fe-2S] cluster.

It belongs to the radical SAM superfamily. Biotin synthase family. Homodimer. [4Fe-4S] cluster is required as a cofactor. Requires [2Fe-2S] cluster as cofactor.

The catalysed reaction is (4R,5S)-dethiobiotin + (sulfur carrier)-SH + 2 reduced [2Fe-2S]-[ferredoxin] + 2 S-adenosyl-L-methionine = (sulfur carrier)-H + biotin + 2 5'-deoxyadenosine + 2 L-methionine + 2 oxidized [2Fe-2S]-[ferredoxin]. It participates in cofactor biosynthesis; biotin biosynthesis; biotin from 7,8-diaminononanoate: step 2/2. Functionally, catalyzes the conversion of dethiobiotin (DTB) to biotin by the insertion of a sulfur atom into dethiobiotin via a radical-based mechanism. The sequence is that of Biotin synthase from Lysinibacillus sphaericus (strain C3-41).